Reading from the N-terminus, the 387-residue chain is Putative serine/threonine-protein kinase (387 aa).

A Protein kinase domain is found at 15-344; that stretch reads YQIEKLLNRG…ERVLEGQVEI (330 aa). ATP is bound by residues 21 to 29 and Lys55; that span reads LNRGGMDSY. Asp164 (proton acceptor) is an active-site residue. Transmembrane regions (helical) follow at residues 232–252 and 363–383; these read PPNAQYDIYSLGIILFEMLVG and SIFTIVFIGLIIAAIVLLLIF.

Belongs to the protein kinase superfamily. Ser/Thr protein kinase family.

It localises to the cell membrane. The catalysed reaction is L-seryl-[protein] + ATP = O-phospho-L-seryl-[protein] + ADP + H(+). The enzyme catalyses L-threonyl-[protein] + ATP = O-phospho-L-threonyl-[protein] + ADP + H(+). The chain is Putative serine/threonine-protein kinase from Mycoplasma genitalium (strain ATCC 33530 / DSM 19775 / NCTC 10195 / G37) (Mycoplasmoides genitalium).